We begin with the raw amino-acid sequence, 399 residues long: N-acetylglucosamine-6-phosphate deacetylase (399 aa).

Residues His65, His67, and Glu135 each coordinate a divalent metal cation. Position 146–147 (146–147 (AH)) interacts with substrate. The a divalent metal cation site is built by His201 and His222. Residues 225–226 (NG), Arg233, and 254–257 (DGHH) each bind substrate. Asp279 is an a divalent metal cation binding site. Residue Asp279 is the Proton donor/acceptor of the active site. 312–314 (LAG) lines the substrate pocket.

The protein belongs to the metallo-dependent hydrolases superfamily. NagA family. In terms of assembly, homodimer. A divalent metal cation serves as cofactor.

The enzyme catalyses N-acetyl-D-glucosamine 6-phosphate + H2O = D-glucosamine 6-phosphate + acetate. Its pathway is amino-sugar metabolism; N-acetylneuraminate degradation; D-fructose 6-phosphate from N-acetylneuraminate: step 4/5. Its function is as follows. Involved in the first committed step in the biosynthesis of amino-sugar-nucleotides. Catalyzes the hydrolysis of the N-acetyl group of N-acetylglucosamine-6-phosphate (GlcNAc-6-P) to yield glucosamine 6-phosphate and acetate. This Vibrio furnissii protein is N-acetylglucosamine-6-phosphate deacetylase (manD).